The primary structure comprises 356 residues: MKREILLERIDKLKQLMPWYVLEYYQSKLAVPYSFTTLYEYLKEYDRFFSWVLESGISNADKISDIPLSVLENMSKKDMESFILYLRERPLLNANTTKQGVSQTTINRTLSALSSLYKYLTEEVENDQGEPYFYRNVMKKVSTKKKKETLAARAENIKQKLFLGDETEGFLTYIDQEHPQQLSNRALSSFNKNKERDLAIIALLLASGVRLSEAVNLDLRDLNLKMMVIDVTRKGGKRDSVNVAAFAKPYLENYLAIRNQRYKTEKTDTALFLTLYRGVPNRIDASSVEKMVAKYSEDFKVRVTPHKLRHTLATRLYDATKSQVLVSHQLGHASTQVTDLYTHIVSDEQKNALDSL.

The Core-binding (CB) domain occupies 16 to 121 (LMPWYVLEYY…ALSSLYKYLT (106 aa)). Residues 169 to 354 (GFLTYIDQEH…VSDEQKNALD (186 aa)) enclose the Tyr recombinase domain. Residues R210, K234, H306, R309, and H332 contribute to the active site. Y341 acts as the O-(3'-phospho-DNA)-tyrosine intermediate in catalysis.

The protein belongs to the 'phage' integrase family. XerS subfamily.

Its subcellular location is the cytoplasm. Its activity is regulated as follows. FtsK is required for recombination. Site-specific tyrosine recombinase, which acts by catalyzing the cutting and rejoining of the recombining DNA molecules. Essential to convert dimers of the bacterial chromosome into monomers to permit their segregation at cell division. The protein is Tyrosine recombinase XerS of Streptococcus pneumoniae (strain 70585).